The primary structure comprises 183 residues: ATP-dependent protease subunit HslV (183 aa).

Thr13 is an active-site residue. Na(+) contacts are provided by Gly168, Cys171, and Thr174.

It belongs to the peptidase T1B family. HslV subfamily. As to quaternary structure, a double ring-shaped homohexamer of HslV is capped on each side by a ring-shaped HslU homohexamer. The assembly of the HslU/HslV complex is dependent on binding of ATP.

The protein resides in the cytoplasm. It carries out the reaction ATP-dependent cleavage of peptide bonds with broad specificity.. Its activity is regulated as follows. Allosterically activated by HslU binding. Its function is as follows. Protease subunit of a proteasome-like degradation complex believed to be a general protein degrading machinery. This Xanthomonas campestris pv. campestris (strain ATCC 33913 / DSM 3586 / NCPPB 528 / LMG 568 / P 25) protein is ATP-dependent protease subunit HslV.